A 756-amino-acid polypeptide reads, in one-letter code: Tubulin glycylase 3B (756 aa).

The segment at 104–123 (TPLPRTVTSSPTAPEAQKRQ) is disordered. Residues 272–629 (LEERMAFIED…DLPKNPTAAT (358 aa)) enclose the TTL domain. Residues 440 to 443 (QKYI), K453, and D455 contribute to the ATP site. Residues 709 to 736 (ITKKKKLSASAGSSTAASAQPSTQNLTT) are disordered. Positions 716 to 727 (SASAGSSTAASA) are enriched in low complexity.

It is found in the cytoplasm. The protein resides in the cytoskeleton. The protein localises to the nucleus. Its function is as follows. Essential glycylase which modifies both tubulin and non-tubulin proteins, generating side chains of glycine on the gamma-carboxyl groups of specific glutamate residues of target proteins. Monoglycylates alpha-tubulin by adding a single glycine chain to generate monoglycine side chains, but is not involved in elongation step to generate polyglycine side chains on alpha-tubulin. Has the ability to both mono- and polyglycylate non-tubulin proteins such as up (Troponin T). Required for early steps of spermatogenesis. This is Tubulin glycylase 3B (TTLL3B) from Drosophila melanogaster (Fruit fly).